Here is a 131-residue protein sequence, read N- to C-terminus: Bacteriohemerythrin (131 aa).

Residues H20, E23, H56, E60, H75, H79, H117, and D122 each coordinate Fe cation.

The protein belongs to the hemerythrin family. In terms of assembly, monomer.

Functionally, oxygen-binding protein. May be involved in a storage mechanism or for delivery to oxygen-requiring enzymes. The oxygen-binding site contains two iron atoms. This chain is Bacteriohemerythrin, found in Aquifex aeolicus (strain VF5).